The chain runs to 255 residues: Transcription factor CAULIFLOWER (255 aa).

The MADS-box domain occupies 1–61 (MGRGRVELKR…GKLFEYSSES (61 aa)). The K-box domain maps to 90 to 180 (QTNWSMEYSR…TKQIKERENI (91 aa)). Positions 90–198 (QTNWSMEYSR…EQLNRSVDDV (109 aa)) form a coiled coil.

In terms of assembly, homodimer capable of binding to CArG-box sequences. In terms of tissue distribution, expressed in young flower primordia.

Its subcellular location is the nucleus. In terms of biological role, probable transcription factor that promotes early floral meristem identity in synergy with APETALA1, FRUITFULL and LEAFY. Is required subsequently for the transition of an inflorescence meristem into a floral meristem. Seems to be partially redundant to the function of APETALA1. Positively regulates the APETALA1 and LEAFY expression. In Arabidopsis thaliana (Mouse-ear cress), this protein is Transcription factor CAULIFLOWER (CAL).